The sequence spans 149 residues: D-aminoacyl-tRNA deacylase (149 aa).

The Gly-cisPro motif, important for rejection of L-amino acids motif lies at 141-142 (GP).

This sequence belongs to the DTD family. As to quaternary structure, homodimer.

Its subcellular location is the cytoplasm. It carries out the reaction glycyl-tRNA(Ala) + H2O = tRNA(Ala) + glycine + H(+). The catalysed reaction is a D-aminoacyl-tRNA + H2O = a tRNA + a D-alpha-amino acid + H(+). Its function is as follows. An aminoacyl-tRNA editing enzyme that deacylates mischarged D-aminoacyl-tRNAs. Also deacylates mischarged glycyl-tRNA(Ala), protecting cells against glycine mischarging by AlaRS. Acts via tRNA-based rather than protein-based catalysis; rejects L-amino acids rather than detecting D-amino acids in the active site. By recycling D-aminoacyl-tRNA to D-amino acids and free tRNA molecules, this enzyme counteracts the toxicity associated with the formation of D-aminoacyl-tRNA entities in vivo and helps enforce protein L-homochirality. This chain is D-aminoacyl-tRNA deacylase, found in Hydrogenovibrio crunogenus (strain DSM 25203 / XCL-2) (Thiomicrospira crunogena).